A 71-amino-acid polypeptide reads, in one-letter code: uncharacterized protein (71 aa).

This is an uncharacterized protein from Archaeoglobus fulgidus (strain ATCC 49558 / DSM 4304 / JCM 9628 / NBRC 100126 / VC-16).